A 270-amino-acid chain; its full sequence is Phospholysine phosphohistidine inorganic pyrophosphate phosphatase (270 aa).

The Mg(2+) site is built by Asp-17 and Ser-19. Substrate-binding positions include 17–19, 54–55, and Lys-189; these read DIS and TN. Position 214 (Asp-214) interacts with Mg(2+).

This sequence belongs to the HAD-like hydrolase superfamily. As to quaternary structure, homodimer. Requires Mg(2+) as cofactor.

Its subcellular location is the cytoplasm. The protein localises to the nucleus. It catalyses the reaction diphosphate + H2O = 2 phosphate + H(+). In terms of biological role, phosphatase that hydrolyzes imidodiphosphate, 3-phosphohistidine and 6-phospholysine. Has broad substrate specificity and can also hydrolyze inorganic diphosphate, but with lower efficiency. This is Phospholysine phosphohistidine inorganic pyrophosphate phosphatase (Lhpp) from Mus musculus (Mouse).